The following is a 66-amino-acid chain: Large ribosomal subunit protein bL35 (66 aa).

The protein belongs to the bacterial ribosomal protein bL35 family.

The sequence is that of Large ribosomal subunit protein bL35 from Caulobacter sp. (strain K31).